Here is a 441-residue protein sequence, read N- to C-terminus: Tol-Pal system protein TolB (441 aa).

A signal peptide spans 1 to 39 (MPAMTPAFRRADLTGFLRTYGAALILLLAAMLAWQPAQA).

It belongs to the TolB family. As to quaternary structure, the Tol-Pal system is composed of five core proteins: the inner membrane proteins TolA, TolQ and TolR, the periplasmic protein TolB and the outer membrane protein Pal. They form a network linking the inner and outer membranes and the peptidoglycan layer.

It is found in the periplasm. Its function is as follows. Part of the Tol-Pal system, which plays a role in outer membrane invagination during cell division and is important for maintaining outer membrane integrity. The chain is Tol-Pal system protein TolB from Bordetella parapertussis (strain 12822 / ATCC BAA-587 / NCTC 13253).